Consider the following 805-residue polypeptide: Cation channel sperm-associated auxiliary subunit delta (805 aa).

Positions 1–16 are cleaved as a signal peptide; the sequence is MLVLMLAAAVATMVRA. Over 17-723 the chain is Extracellular; sequence HTLCRVHTVR…ALPVTKFQPL (707 aa). 7 disulfide bridges follow: Cys20-Cys366, Cys56-Cys143, Cys142-Cys149, Cys384-Cys493, Cys507-Cys701, Cys522-Cys569, and Cys621-Cys651. 5 N-linked (GlcNAc...) asparagine glycosylation sites follow: Asn227, Asn419, Asn469, Asn535, and Asn627. A helical transmembrane segment spans residues 724–745; that stretch reads LTILLMVTTTLLTAWLAYAIPK. Topologically, residues 746–805 are cytoplasmic; that stretch reads QLRSEKGQRLLGFCYQILQLCLGVCFCTWLRGKLRQWLRPRRVKDQNRGKVRVAQKHPET.

The protein belongs to the CATSPERD family. As to quaternary structure, component of the CatSper complex or CatSpermasome composed of the core pore-forming members CATSPER1, CATSPER2, CATSPER3 and CATSPER4 as well as auxiliary members CATSPERB, CATSPERG2, CATSPERD, CATSPERE, CATSPERZ, C2CD6/CATSPERT, SLCO6C1, TMEM249, TMEM262 and EFCAB9. HSPA1 may be an additional auxiliary complex member. The core complex members CATSPER1, CATSPER2, CATSPER3 and CATSPER4 form a heterotetrameric channel. The auxiliary CATSPERB, CATSPERG2, CATSPERD and CATSPERE subunits form a pavilion-like structure over the pore which stabilizes the complex through interactions with CATSPER4, CATSPER3, CATSPER1 and CATSPER2 respectively. SLCO6C1 interacts with CATSPERE and TMEM262/CATSPERH interacts with CATSPERB, further stabilizing the complex. C2CD6/CATSPERT interacts at least with CATSPERD and is required for targeting the CatSper complex in the flagellar membrane. As to expression, testis-specific.

It localises to the cell projection. The protein resides in the cilium. It is found in the flagellum membrane. In terms of biological role, auxiliary component of the CatSper complex, a complex involved in sperm cell hyperactivation. Sperm cell hyperactivation is needed for sperm motility which is essential late in the preparation of sperm for fertilization. Required for CATSPER1 stability before intraflagellar transport and/or incorporation of the CatSper complex channel into the flagellar membrane. This is Cation channel sperm-associated auxiliary subunit delta from Mus musculus (Mouse).